We begin with the raw amino-acid sequence, 247 residues long: 3-deoxy-manno-octulosonate cytidylyltransferase (247 aa).

It belongs to the KdsB family.

The protein localises to the cytoplasm. It carries out the reaction 3-deoxy-alpha-D-manno-oct-2-ulosonate + CTP = CMP-3-deoxy-beta-D-manno-octulosonate + diphosphate. Its pathway is nucleotide-sugar biosynthesis; CMP-3-deoxy-D-manno-octulosonate biosynthesis; CMP-3-deoxy-D-manno-octulosonate from 3-deoxy-D-manno-octulosonate and CTP: step 1/1. It functions in the pathway bacterial outer membrane biogenesis; lipopolysaccharide biosynthesis. In terms of biological role, activates KDO (a required 8-carbon sugar) for incorporation into bacterial lipopolysaccharide in Gram-negative bacteria. This is 3-deoxy-manno-octulosonate cytidylyltransferase from Pelodictyon phaeoclathratiforme (strain DSM 5477 / BU-1).